We begin with the raw amino-acid sequence, 456 residues long: Pantothenate kinase 2, mitochondrial (456 aa).

The segment at 16–89 is disordered; that stretch reads AGRFGAPMER…TSAGRPRAEG (74 aa). Low complexity-rich tracts occupy residues 28 to 39 and 55 to 65; these read RAAATSAAVGES and SSAAPSGSGEA. A phosphoserine mark is found at serine 55, serine 56, and serine 75. Residues 154–161 carry the Nuclear export signal motif; sequence LELKDLTL. The active-site Proton acceptor is glutamate 224. 3 residues coordinate acetyl-CoA: serine 278, serine 281, and arginine 293.

This sequence belongs to the type II pantothenate kinase family. In terms of assembly, homodimer.

It localises to the cytoplasm. It is found in the cytosol. It carries out the reaction (R)-pantothenate + ATP = (R)-4'-phosphopantothenate + ADP + H(+). It participates in cofactor biosynthesis; coenzyme A biosynthesis; CoA from (R)-pantothenate: step 1/5. Inhibited by acetyl-CoA. Inhibited by calcium hopantenate. Activated by palmitoylcarnitine. In terms of biological role, catalyzes the phosphorylation of pantothenate to generate 4'-phosphopantothenate in the first and rate-determining step of coenzyme A (CoA) synthesis. This chain is Pantothenate kinase 2, mitochondrial (Pank2), found in Mus musculus (Mouse).